Consider the following 163-residue polypeptide: Crossover junction endodeoxyribonuclease RuvC (163 aa).

Active-site residues include D9, E76, and D148. D9, E76, and D148 together coordinate Mg(2+).

Belongs to the RuvC family. Homodimer which binds Holliday junction (HJ) DNA. The HJ becomes 2-fold symmetrical on binding to RuvC with unstacked arms; it has a different conformation from HJ DNA in complex with RuvA. In the full resolvosome a probable DNA-RuvA(4)-RuvB(12)-RuvC(2) complex forms which resolves the HJ. Mg(2+) is required as a cofactor.

Its subcellular location is the cytoplasm. It carries out the reaction Endonucleolytic cleavage at a junction such as a reciprocal single-stranded crossover between two homologous DNA duplexes (Holliday junction).. Its function is as follows. The RuvA-RuvB-RuvC complex processes Holliday junction (HJ) DNA during genetic recombination and DNA repair. Endonuclease that resolves HJ intermediates. Cleaves cruciform DNA by making single-stranded nicks across the HJ at symmetrical positions within the homologous arms, yielding a 5'-phosphate and a 3'-hydroxyl group; requires a central core of homology in the junction. The consensus cleavage sequence is 5'-(A/T)TT(C/G)-3'. Cleavage occurs on the 3'-side of the TT dinucleotide at the point of strand exchange. HJ branch migration catalyzed by RuvA-RuvB allows RuvC to scan DNA until it finds its consensus sequence, where it cleaves and resolves the cruciform DNA. This is Crossover junction endodeoxyribonuclease RuvC from Trichodesmium erythraeum (strain IMS101).